Reading from the N-terminus, the 434-residue chain is Glutamate-1-semialdehyde 2,1-aminomutase (434 aa).

Lys-267 is subject to N6-(pyridoxal phosphate)lysine.

This sequence belongs to the class-III pyridoxal-phosphate-dependent aminotransferase family. HemL subfamily. Homodimer. Pyridoxal 5'-phosphate serves as cofactor.

The protein resides in the cytoplasm. It carries out the reaction (S)-4-amino-5-oxopentanoate = 5-aminolevulinate. The protein operates within porphyrin-containing compound metabolism; protoporphyrin-IX biosynthesis; 5-aminolevulinate from L-glutamyl-tRNA(Glu): step 2/2. It functions in the pathway porphyrin-containing compound metabolism; chlorophyll biosynthesis. In Roseiflexus castenholzii (strain DSM 13941 / HLO8), this protein is Glutamate-1-semialdehyde 2,1-aminomutase.